A 440-amino-acid chain; its full sequence is Tryptophan synthase beta chain (440 aa).

K110 carries the post-translational modification N6-(pyridoxal phosphate)lysine.

This sequence belongs to the TrpB family. Tetramer of two alpha and two beta chains. The cofactor is pyridoxal 5'-phosphate.

It carries out the reaction (1S,2R)-1-C-(indol-3-yl)glycerol 3-phosphate + L-serine = D-glyceraldehyde 3-phosphate + L-tryptophan + H2O. The protein operates within amino-acid biosynthesis; L-tryptophan biosynthesis; L-tryptophan from chorismate: step 5/5. Its function is as follows. The beta subunit is responsible for the synthesis of L-tryptophan from indole and L-serine. The protein is Tryptophan synthase beta chain of Thermococcus gammatolerans (strain DSM 15229 / JCM 11827 / EJ3).